The sequence spans 307 residues: Coproporphyrin III ferrochelatase (307 aa).

Residues Y12, R29, 45–46, S53, and Y124 contribute to the Fe-coproporphyrin III site; that span reads RY. Fe(2+)-binding residues include H181 and E263.

It belongs to the ferrochelatase family.

It localises to the cytoplasm. It catalyses the reaction Fe-coproporphyrin III + 2 H(+) = coproporphyrin III + Fe(2+). Its pathway is porphyrin-containing compound metabolism; protoheme biosynthesis. Its function is as follows. Involved in coproporphyrin-dependent heme b biosynthesis. Catalyzes the insertion of ferrous iron into coproporphyrin III to form Fe-coproporphyrin III. This Staphylococcus aureus (strain MRSA252) protein is Coproporphyrin III ferrochelatase.